The primary structure comprises 389 residues: Chalcone synthase 1 (389 aa).

Cys164 is a catalytic residue.

Belongs to the thiolase-like superfamily. Chalcone/stilbene synthases family.

It carries out the reaction (E)-4-coumaroyl-CoA + 3 malonyl-CoA + 3 H(+) = 2',4,4',6'-tetrahydroxychalcone + 3 CO2 + 4 CoA. It functions in the pathway secondary metabolite biosynthesis; flavonoid biosynthesis. The primary product of this enzyme is 4,2',4',6'-tetrahydroxychalcone (also termed naringenin-chalcone or chalcone) which can under specific conditions spontaneously isomerize into naringenin. This Pisum sativum (Garden pea) protein is Chalcone synthase 1 (CHS1).